The following is a 164-amino-acid chain: MRHRTGFNPLSCMAAHRRALRRNMVTSLFKFERITTTKPKAAEVRRAAERLITRSKSDSVHNRRQVARFIWDKAVLHKLFADIGPRMREREGGYTRILKLGLRQGDAAHVVVLELVDYTFEKSLKKRARTDSVPARKGAGKKDASRVSGTVPDGQSQKIGKKKE.

The disordered stretch occupies residues 127–164 (RARTDSVPARKGAGKKDASRVSGTVPDGQSQKIGKKKE).

This sequence belongs to the bacterial ribosomal protein bL17 family. Part of the 50S ribosomal subunit. Contacts protein L32.

The chain is Large ribosomal subunit protein bL17 from Treponema pallidum (strain Nichols).